Consider the following 190-residue polypeptide: uncharacterized protein (190 aa).

The first 15 residues, 1 to 15 (MKVFAYIALATVVAG), serve as a signal peptide directing secretion.

The protein localises to the secreted. This is an uncharacterized protein from Arthroderma benhamiae (strain ATCC MYA-4681 / CBS 112371) (Trichophyton mentagrophytes).